The primary structure comprises 155 residues: UPF0461 protein C5orf24 homolog (155 aa).

Residues Asn60 to Ser69 are compositionally biased toward polar residues. Residues Asn60 to Ala155 are disordered. Over residues Leu78–Arg92 the composition is skewed to basic residues. A compositionally biased stretch (polar residues) spans Ser94–Gly107.

The protein belongs to the UPF0461 family.

The polypeptide is UPF0461 protein C5orf24 homolog (Xenopus laevis (African clawed frog)).